The sequence spans 1542 residues: Pleiotropic ABC efflux transporter of multiple drugs PDH1 (1542 aa).

Residues 1-14 (MNTPDDSSVSSVDS) show a composition bias toward low complexity. The tract at residues 1–61 (MNTPDDSSVS…APADGSAPLD (61 aa)) is disordered. The Cytoplasmic segment spans residues 1–517 (MNTPDDSSVS…LIRNFWRIKN (517 aa)). Residues 24–33 (NVEKRIRELA) show a composition bias toward basic and acidic residues. Residues 35 to 47 (SLTQQSLTSSNRS) show a composition bias toward polar residues. An ABC transporter 1 domain is found at 153 to 409 (VKLLNAVWRK…FQKMGYFCPK (257 aa)). A run of 6 helical transmembrane segments spans residues 518–540 (SASV…GSMF), 552–574 (FYFR…LLEI), 603–625 (VISE…YFLV), 634–652 (FFFY…SHLF), 662–684 (LQEA…GFAI), and 773–792 (GFGV…LILC). The Cytoplasmic portion of the chain corresponds to 793–1220 (EFNEGAKQKG…LFQQYWRTPD (428 aa)). A compositionally biased stretch (basic and acidic residues) spans 825 to 834 (TKMHTDKNDI). A disordered region spans residues 825 to 846 (TKMHTDKNDIENNSESITSNAT). Polar residues predominate over residues 835–846 (ENNSESITSNAT). The ABC transporter 2 domain maps to 885–1128 (FHWQNLCYDV…MIKYFEDHGA (244 aa)). Residue 921–928 (GASGAGKT) coordinates ATP. 6 consecutive transmembrane segments (helical) span residues 1221–1241 (YLWS…FTFF), 1256–1276 (SIFM…PTFV), 1296–1316 (AFIL…GTLA), 1342–1362 (LFWL…LFVI), 1370–1390 (TAAH…GVMA), and 1495–1515 (GIFI…YWLA). At 1516 to 1542 (RVPKTNGKIAKNGKTAKVNFIRRLIPF) the chain is on the cytoplasmic side.

Belongs to the ABC transporter superfamily. ABCG family. PDR (TC 3.A.1.205) subfamily. Post-translationally, phosphorylated by PKA. Dephosphorylated on glucose depletion and independently rephosphorylated during glucose exposure or under stress.

It is found in the cell membrane. Pleiotropic ABC efflux transporter that confers resistance to structurally and functionally unrelated compounds including caspofungin or azoles such as fluconazole, itraconazole, posaconazole, voriconazole, and isavuconazole. Does not play a role in the azole resistance in mature biofilms. The protein is Pleiotropic ABC efflux transporter of multiple drugs PDH1 of Candida glabrata (strain ATCC 2001 / BCRC 20586 / JCM 3761 / NBRC 0622 / NRRL Y-65 / CBS 138) (Yeast).